A 213-amino-acid chain; its full sequence is Phosphatidylserine decarboxylase proenzyme (213 aa).

Catalysis depends on Ser-180, which acts as the Schiff-base intermediate with substrate; via pyruvic acid. Ser-180 is subject to Pyruvic acid (Ser); by autocatalysis.

It belongs to the phosphatidylserine decarboxylase family. PSD-A subfamily. In terms of assembly, heterodimer of a large membrane-associated beta subunit and a small pyruvoyl-containing alpha subunit. Requires pyruvate as cofactor. Is synthesized initially as an inactive proenzyme. Formation of the active enzyme involves a self-maturation process in which the active site pyruvoyl group is generated from an internal serine residue via an autocatalytic post-translational modification. Two non-identical subunits are generated from the proenzyme in this reaction, and the pyruvate is formed at the N-terminus of the alpha chain, which is derived from the carboxyl end of the proenzyme. The post-translation cleavage follows an unusual pathway, termed non-hydrolytic serinolysis, in which the side chain hydroxyl group of the serine supplies its oxygen atom to form the C-terminus of the beta chain, while the remainder of the serine residue undergoes an oxidative deamination to produce ammonia and the pyruvoyl prosthetic group on the alpha chain.

The protein resides in the cell membrane. The enzyme catalyses a 1,2-diacyl-sn-glycero-3-phospho-L-serine + H(+) = a 1,2-diacyl-sn-glycero-3-phosphoethanolamine + CO2. It participates in phospholipid metabolism; phosphatidylethanolamine biosynthesis; phosphatidylethanolamine from CDP-diacylglycerol: step 2/2. Functionally, catalyzes the formation of phosphatidylethanolamine (PtdEtn) from phosphatidylserine (PtdSer). The polypeptide is Phosphatidylserine decarboxylase proenzyme (Carboxydothermus hydrogenoformans (strain ATCC BAA-161 / DSM 6008 / Z-2901)).